The chain runs to 357 residues: MGSLEVERKTVGWAARDPSGVLSPYEYTLRNTGPQDVYVEVMCCGICHTDVHQIKNDLGMSNYPMVPGHEVVGEVVEVGSEVTKFRAGDVVGVGCIVGSCGNCRPCNSDIEQYCNKKIWSYNDVYPDGKPTQGGFAGAMVVDQKFVVKIPDGMAPEQAAPLLCAGVTVYSPLNHFGLKQSGLRGGILGLGGVGHMGVKIAKAMGHHVTVISSSDKKRAEALDHLGADDYLVSSDAARMQEAADSLDYIIDTVPVFHPLEPYLSLLKIDGKLILMGVVNTPLQFVSPMVMLGRKSITGSFIGSMKELAEMLEFCKEKDLSSTIEIVKMDYINTAFERLEKNDVRYRFVVDVAGSKLYQ.

A Zn(2+)-binding site is contributed by cysteine 47. Threonine 49 is an NADP(+) binding site. Residues histidine 69, glutamate 70, cysteine 100, cysteine 103, cysteine 106, cysteine 114, and cysteine 163 each contribute to the Zn(2+) site. Residues threonine 167, 188 to 193 (GLGGVG), 211 to 216 (SSSDKK), threonine 251, glycine 275, and 298 to 300 (SFI) each bind NADP(+).

The protein belongs to the zinc-containing alcohol dehydrogenase family. As to quaternary structure, homodimer. Requires Zn(2+) as cofactor. As to expression, expressed in leaves, mainly in peltate glands.

It catalyses the reaction (E)-cinnamyl alcohol + NADP(+) = (E)-cinnamaldehyde + NADPH + H(+). The catalysed reaction is (E)-coniferol + NADP(+) = (E)-coniferaldehyde + NADPH + H(+). The enzyme catalyses (E)-sinapyl alcohol + NADP(+) = (E)-sinapaldehyde + NADPH + H(+). It carries out the reaction (E)-4-coumaroyl alcohol + NADP(+) = (E)-4-coumaraldehyde + NADPH + H(+). It catalyses the reaction (E)-caffeyl alcohol + NADP(+) = (E)-caffeyl aldehyde + NADPH + H(+). It participates in aromatic compound metabolism; phenylpropanoid biosynthesis. Its activity is regulated as follows. 60% inhibition by 5 mM Ca(+), Mg(+) or Cu(+). In terms of biological role, involved in the production of citral, a mixture of geranial and neral with a strong lemony scent. Reversibly oxidizes geraniol to produce geranial at half the efficiency compared with its activity with cinnamyl alcohol. Does not use nerol and neral as substrates. The chain is Cinnamyl alcohol dehydrogenase 1 (CAD1) from Ocimum basilicum (Sweet basil).